A 387-amino-acid chain; its full sequence is BarH-like 2 homeobox protein (387 aa).

3 disordered regions span residues 1–145 (MTME…FLIK), 157–240 (CAPY…TAFS), and 367–387 (PGGQ…PHPR). Residues 7-24 (SGSSFGIDTILSSASSGS) show a composition bias toward polar residues. Over residues 100-113 (APTQSLQPLPQQQQ) the composition is skewed to low complexity. Positions 114–126 (PLPPQQPPPPPPQ) are enriched in pro residues. Residues 127–141 (QLGSAASAPRTSTSS) are compositionally biased toward low complexity. The span at 160 to 178 (YSTSVSSPHHTPKQESNAV) shows a compositional bias: polar residues. Basic and acidic residues predominate over residues 180–220 (ESFRPKLEQEDSKTKLDKREDSQSDIKCHGTKEEGDREITS). The segment at residues 232–291 (PRKARTAFSDHQLNQLERSFERQKYLSVQDRMDLAAALNLTDTQVKTWYQNRRTKWKRQT) is a DNA-binding region (homeobox).

This sequence belongs to the BAR homeobox family.

It localises to the nucleus. Functionally, potential regulator of neural basic helix-loop-helix genes. The sequence is that of BarH-like 2 homeobox protein (BARHL2) from Homo sapiens (Human).